A 123-amino-acid polypeptide reads, in one-letter code: Small ribosomal subunit protein uS12 (123 aa).

Positions 1 to 28 are disordered; that stretch reads MPTIQQLIRKPRQPKVKRSKSMHLEQCP. Residues 9 to 21 are compositionally biased toward basic residues; that stretch reads RKPRQPKVKRSKS. The residue at position 89 (Asp-89) is a 3-methylthioaspartic acid.

The protein belongs to the universal ribosomal protein uS12 family. In terms of assembly, part of the 30S ribosomal subunit. Contacts proteins S8 and S17. May interact with IF1 in the 30S initiation complex.

In terms of biological role, with S4 and S5 plays an important role in translational accuracy. Its function is as follows. Interacts with and stabilizes bases of the 16S rRNA that are involved in tRNA selection in the A site and with the mRNA backbone. Located at the interface of the 30S and 50S subunits, it traverses the body of the 30S subunit contacting proteins on the other side and probably holding the rRNA structure together. The combined cluster of proteins S8, S12 and S17 appears to hold together the shoulder and platform of the 30S subunit. The polypeptide is Small ribosomal subunit protein uS12 (Ruegeria sp. (strain TM1040) (Silicibacter sp.)).